The following is a 215-amino-acid chain: Adenylate kinase (215 aa).

10–15 (GAGKGT) contributes to the ATP binding site. The tract at residues 30–59 (STGDMLRAAIKAGTPLGLEAKKIIDEGGLV) is NMP. AMP contacts are provided by residues threonine 31, arginine 36, 57 to 59 (GLV), 85 to 88 (GFPR), and glutamine 92. An LID region spans residues 122–159 (GRRVHLASGRTYHVTYNPPKTEGKDDVTGEDLIQRDDD). ATP contacts are provided by residues arginine 123 and 132 to 133 (TY). Arginine 156 and arginine 167 together coordinate AMP. Glutamine 200 lines the ATP pocket.

The protein belongs to the adenylate kinase family. In terms of assembly, monomer.

The protein resides in the cytoplasm. It catalyses the reaction AMP + ATP = 2 ADP. Its pathway is purine metabolism; AMP biosynthesis via salvage pathway; AMP from ADP: step 1/1. Its function is as follows. Catalyzes the reversible transfer of the terminal phosphate group between ATP and AMP. Plays an important role in cellular energy homeostasis and in adenine nucleotide metabolism. This is Adenylate kinase from Neisseria gonorrhoeae (strain ATCC 700825 / FA 1090).